A 105-amino-acid chain; its full sequence is ATP synthase subunit c (105 aa).

2 helical membrane passes run 37–57 and 82–102; these read IGAG…GYIF and SAIS…LIFV.

This sequence belongs to the ATPase C chain family. F-type ATPases have 2 components, F(1) - the catalytic core - and F(0) - the membrane proton channel. F(1) has five subunits: alpha(3), beta(3), gamma(1), delta(1), epsilon(1). F(0) has three main subunits: a(1), b(2) and c(10-14). The alpha and beta chains form an alternating ring which encloses part of the gamma chain. F(1) is attached to F(0) by a central stalk formed by the gamma and epsilon chains, while a peripheral stalk is formed by the delta and b chains.

The protein resides in the cell membrane. Functionally, f(1)F(0) ATP synthase produces ATP from ADP in the presence of a proton or sodium gradient. F-type ATPases consist of two structural domains, F(1) containing the extramembraneous catalytic core and F(0) containing the membrane proton channel, linked together by a central stalk and a peripheral stalk. During catalysis, ATP synthesis in the catalytic domain of F(1) is coupled via a rotary mechanism of the central stalk subunits to proton translocation. In terms of biological role, key component of the F(0) channel; it plays a direct role in translocation across the membrane. A homomeric c-ring of between 10-14 subunits forms the central stalk rotor element with the F(1) delta and epsilon subunits. This chain is ATP synthase subunit c, found in Mycoplasma pneumoniae (strain ATCC 29342 / M129 / Subtype 1) (Mycoplasmoides pneumoniae).